A 307-amino-acid polypeptide reads, in one-letter code: Taste receptor type 2 member 10 (307 aa).

The Extracellular segment spans residues 1 to 6; that stretch reads MLSVVE. Residues 7-27 traverse the membrane as a helical segment; sequence GILILVVISESVFGVLGNGFI. Topologically, residues 28–42 are cytoplasmic; that stretch reads GLVNCIDCAKNKLST. A helical transmembrane segment spans residues 43 to 63; that stretch reads IGFILTGLAISRIFLIWIIIT. At 64 to 100 the chain is on the extracellular side; it reads DGFIQIFSPDVYASGNLIEYISYFWVITNQSSIWFAT. N92 carries N-linked (GlcNAc...) asparagine glycosylation. A helical transmembrane segment spans residues 101–121; sequence SLSIFYFLKIANFSNYIFLWL. At 122–126 the chain is on the cytoplasmic side; that stretch reads KSRIN. Residues 127 to 147 form a helical membrane-spanning segment; sequence RVLPLLMGFLLISCLLNFAYI. The Extracellular portion of the chain corresponds to 148–179; that stretch reads VKILNDLKMKNDTVWRLNMYKSEYFIKQLLLN. N-linked (GlcNAc...) asparagine glycosylation is present at N158. A helical membrane pass occupies residues 180–200; sequence LGVIFFFTLSLITSVLLIISL. Over 201-227 the chain is Cytoplasmic; that stretch reads WRHNRQMQSNVTGLRDSITEAHVKAMK. The helical transmembrane segment at 228-248 threads the bilayer; the sequence is VLISFIILFILYFIGIAIEIS. The Extracellular portion of the chain corresponds to 249–257; sequence YFTVPENKL. A helical transmembrane segment spans residues 258–278; the sequence is LLIFGMTTTAIYPWGHSFILI. At 279 to 307 the chain is on the cytoplasmic side; it reads LGNSKLKQASLRVLQQLKCCEERKNLRAT.

This sequence belongs to the G-protein coupled receptor T2R family.

The protein localises to the membrane. Its function is as follows. Receptor that may play a role in the perception of bitterness and is gustducin-linked. May play a role in sensing the chemical composition of the gastrointestinal content. The activity of this receptor may stimulate alpha gustducin, mediate PLC-beta-2 activation and lead to the gating of TRPM5. This is Taste receptor type 2 member 10 (TAS2R10) from Papio hamadryas (Hamadryas baboon).